Consider the following 144-residue polypeptide: UPF0735 ACT domain-containing protein LSEI_1046 (144 aa).

Residues 68–143 enclose the ACT domain; sequence VISLMLHHDR…GVSDVHLVSV (76 aa).

Belongs to the UPF0735 family.

The protein is UPF0735 ACT domain-containing protein LSEI_1046 of Lacticaseibacillus paracasei (strain ATCC 334 / BCRC 17002 / CCUG 31169 / CIP 107868 / KCTC 3260 / NRRL B-441) (Lactobacillus paracasei).